The primary structure comprises 430 residues: Probable beta-1,3-galactosyl-O-glycosyl-glycoprotein beta-1,6-N-acetylglucosaminyltransferase 7 (430 aa).

Topologically, residues 1–8 (MSQLRATK) are cytoplasmic. The chain crosses the membrane as a helical; Signal-anchor for type II membrane protein span at residues 9–25 (SGLVVRAVICIFIFLYL). At 26–430 (RNPTPAESEE…QSHFNMRLNR (405 aa)) the chain is on the extracellular side. Disulfide bonds link cysteine 53–cysteine 205, cysteine 139–cysteine 354, cysteine 160–cysteine 187, and cysteine 363–cysteine 395. A glycan (N-linked (GlcNAc...) asparagine) is linked at asparagine 87. Asparagine 272 is a glycosylation site (N-linked (GlcNAc...) asparagine).

The protein belongs to the glycosyltransferase 14 family.

It is found in the golgi apparatus membrane. The protein operates within protein modification; protein glycosylation. Probable glycosyltransferase. This Homo sapiens (Human) protein is Probable beta-1,3-galactosyl-O-glycosyl-glycoprotein beta-1,6-N-acetylglucosaminyltransferase 7.